Consider the following 210-residue polypeptide: Na(+)-translocating NADH-quinone reductase subunit D (210 aa).

6 consecutive transmembrane segments (helical) span residues 10 to 30 (VLIG…GVCS), 42 to 62 (LVMT…ISLI), 72 to 92 (IIVQ…VLQA), 103 to 123 (VFVG…AYAM), 131 to 151 (FMDG…VGFV), and 178 to 198 (NGLL…IWII).

Belongs to the NqrDE/RnfAE family. Composed of six subunits; NqrA, NqrB, NqrC, NqrD, NqrE and NqrF.

The protein localises to the cell inner membrane. It catalyses the reaction a ubiquinone + n Na(+)(in) + NADH + H(+) = a ubiquinol + n Na(+)(out) + NAD(+). In terms of biological role, NQR complex catalyzes the reduction of ubiquinone-1 to ubiquinol by two successive reactions, coupled with the transport of Na(+) ions from the cytoplasm to the periplasm. NqrA to NqrE are probably involved in the second step, the conversion of ubisemiquinone to ubiquinol. The chain is Na(+)-translocating NADH-quinone reductase subunit D from Shewanella pealeana (strain ATCC 700345 / ANG-SQ1).